Consider the following 232-residue polypeptide: Phosphatidylserine decarboxylase proenzyme (232 aa).

Ser190 acts as the Schiff-base intermediate with substrate; via pyruvic acid in catalysis. At Ser190 the chain carries Pyruvic acid (Ser); by autocatalysis.

It belongs to the phosphatidylserine decarboxylase family. PSD-A subfamily. In terms of assembly, heterodimer of a large membrane-associated beta subunit and a small pyruvoyl-containing alpha subunit. Pyruvate is required as a cofactor. Is synthesized initially as an inactive proenzyme. Formation of the active enzyme involves a self-maturation process in which the active site pyruvoyl group is generated from an internal serine residue via an autocatalytic post-translational modification. Two non-identical subunits are generated from the proenzyme in this reaction, and the pyruvate is formed at the N-terminus of the alpha chain, which is derived from the carboxyl end of the proenzyme. The post-translation cleavage follows an unusual pathway, termed non-hydrolytic serinolysis, in which the side chain hydroxyl group of the serine supplies its oxygen atom to form the C-terminus of the beta chain, while the remainder of the serine residue undergoes an oxidative deamination to produce ammonia and the pyruvoyl prosthetic group on the alpha chain.

It localises to the cell membrane. It carries out the reaction a 1,2-diacyl-sn-glycero-3-phospho-L-serine + H(+) = a 1,2-diacyl-sn-glycero-3-phosphoethanolamine + CO2. It functions in the pathway phospholipid metabolism; phosphatidylethanolamine biosynthesis; phosphatidylethanolamine from CDP-diacylglycerol: step 2/2. Catalyzes the formation of phosphatidylethanolamine (PtdEtn) from phosphatidylserine (PtdSer). The sequence is that of Phosphatidylserine decarboxylase proenzyme from Rhodopseudomonas palustris (strain HaA2).